The chain runs to 272 residues: Magnetosome protein MamQ 1 (272 aa).

At 1–46 (MALGDANVGSAPGVDFSALQRVKQSEELLAQLYVVEETPRRLGRGP) the chain is on the cytoplasmic side. Residues 47–67 (VHALMVISVLSVVAFIATLLM) form a helical membrane-spanning segment. Residues 68–272 (RYNTFVTMSE…PLNHAQDIKK (205 aa)) are Lumenal-facing.

It belongs to the LemA family.

It localises to the magnetosome membrane. Functionally, essential for magnetosome formation. Can be used to induce magnetosome formation. This is Magnetosome protein MamQ 1 (mamQ1) from Paramagnetospirillum magneticum (strain ATCC 700264 / AMB-1) (Magnetospirillum magneticum).